Reading from the N-terminus, the 274-residue chain is Glucosamine-6-phosphate deaminase (274 aa).

Asp71 acts as the Proton acceptor; for enolization step in catalysis. The active-site For ring-opening step is the Asp140. His142 functions as the Proton acceptor; for ring-opening step in the catalytic mechanism. The active-site For ring-opening step is Glu147.

This sequence belongs to the glucosamine/galactosamine-6-phosphate isomerase family. NagB subfamily.

It catalyses the reaction alpha-D-glucosamine 6-phosphate + H2O = beta-D-fructose 6-phosphate + NH4(+). Its pathway is amino-sugar metabolism; N-acetylneuraminate degradation; D-fructose 6-phosphate from N-acetylneuraminate: step 5/5. In terms of biological role, catalyzes the reversible isomerization-deamination of glucosamine 6-phosphate (GlcN6P) to form fructose 6-phosphate (Fru6P) and ammonium ion. The chain is Glucosamine-6-phosphate deaminase from Fusobacterium nucleatum subsp. nucleatum (strain ATCC 25586 / DSM 15643 / BCRC 10681 / CIP 101130 / JCM 8532 / KCTC 2640 / LMG 13131 / VPI 4355).